Here is a 362-residue protein sequence, read N- to C-terminus: Phosphoglycolate phosphatase 1B, chloroplastic (362 aa).

Residues 1 to 54 constitute a chloroplast transit peptide; the sequence is MLSRSVASAVTPVSSSSLLPNSKPIFCLKTLSGYRSSSFCGGCIRKINHKPLRM. Threonine 55 carries the post-translational modification N-acetylthreonine. Glutamate 80 serves as the catalytic Nucleophile. At serine 356 the chain carries Phosphoserine.

The protein belongs to the HAD-like hydrolase superfamily. CbbY/CbbZ/Gph/YieH family.

The protein localises to the plastid. Its subcellular location is the chloroplast. It carries out the reaction 2-phosphoglycolate + H2O = glycolate + phosphate. Photorespiratory enzyme that dephosphorylates the 2-phosphoglycolate produced by the RuBisCO oxygenation reaction. The chain is Phosphoglycolate phosphatase 1B, chloroplastic (PGLP1B) from Arabidopsis thaliana (Mouse-ear cress).